We begin with the raw amino-acid sequence, 521 residues long: Protein DETOXIFICATION 44, chloroplastic (521 aa).

The transit peptide at 1–31 (MAAVATSFCFSPHRSPSRFGNPNSSIRRTIV) directs the protein to the chloroplast. The segment at 12–73 (PHRSPSRFGN…DHDHKPDPGI (62 aa)) is disordered. 2 stretches are compositionally biased toward polar residues: residues 18 to 27 (RFGNPNSSIR) and 42 to 61 (AVST…TSQN). 12 helical membrane passes run 80-100 (IMSI…TSLV), 103-123 (AFVG…VSVF), 167-187 (VSTS…ALSL), 213-235 (RLRA…FRGF), 242-262 (LYAV…LIFV), 268-288 (SGAA…LLWK), 314-334 (LLIG…SLAA), 345-365 (QIVL…AIAA), 385-405 (LFGV…VLFI), 423-443 (IALS…LAFV), 454-474 (FGFA…FMLV), and 481-503 (LAGI…AWRL).

It belongs to the multi antimicrobial extrusion (MATE) (TC 2.A.66.1) family. As to expression, expressed in shoots.

It localises to the plastid. Its subcellular location is the chloroplast membrane. This is Protein DETOXIFICATION 44, chloroplastic from Arabidopsis thaliana (Mouse-ear cress).